Reading from the N-terminus, the 993-residue chain is Vacuolar membrane protease (993 aa).

Topologically, residues 1 to 24 (MSPAMANPRVRKFNPIAFTPLPVT) are cytoplasmic. The chain crosses the membrane as a helical span at residues 25–45 (LITTIVYLAVLILVLVTYLVV). The Vacuolar portion of the chain corresponds to 46–391 (PPAPTLEMSP…SAFAVFRLHT (346 aa)). 3 N-linked (GlcNAc...) asparagine glycosylation sites follow: Asn-59, Asn-116, and Asn-119. His-175 and Asp-187 together coordinate Zn(2+). Glu-221 functions as the Proton acceptor in the catalytic mechanism. Glu-222 is a binding site for Zn(2+). The N-linked (GlcNAc...) asparagine glycan is linked to Asn-238. Glu-247 and His-320 together coordinate Zn(2+). A helical membrane pass occupies residues 392–412 (LFALSVTLLVSAPLVLFITSI). At 413 to 447 (ALSKTDRMYLFSMSKSLGGTSETVSLRGLRGLFRT) the chain is on the cytoplasmic side. Residues 448-468 (PIILTVTTVITIGLAYLLEKI) traverse the membrane as a helical segment. Over 469–475 (NPYIVHS) the chain is Vacuolar. The helical transmembrane segment at 476–496 (SQFAVWSMMLSVWIFVAWFLA) threads the bilayer. Residues 497–509 (RVADFFRPSALHR) are Cytoplasmic-facing. The chain crosses the membrane as a helical span at residues 510 to 530 (AYSYTWIFIATWIMLVISTVY). At 531-534 (ANQK) the chain is on the vacuolar side. Residues 535–555 (GIAAGYFIFFYFAAVFLATWV) form a helical membrane-spanning segment. Residues 556–672 (SYLELFSLPR…WSWTLPRWTW (117 aa)) lie on the Cytoplasmic side of the membrane. The interval 579-621 (RRSSSLSSRLLTPSADELPSDIGPNGAENLGDPDETDPTESTS) is disordered. Residues 673–693 (ILQLLLLAPIVIILVGQVGLL) traverse the membrane as a helical segment. Residues 694-709 (LTTAMSQIGSDGVSTF) lie on the Vacuolar side of the membrane. A helical transmembrane segment spans residues 710 to 730 (IVYLACALLSTLLFAPLFPFI). Residues 731–737 (HRFTYHV) lie on the Cytoplasmic side of the membrane. A helical membrane pass occupies residues 738-758 (PTFLLLIFIGTLIYNLVAFPF). At 759–993 (SPANRLKIFF…VEASHDFIIQ (235 aa)) the chain is on the vacuolar side. Residues Asn-806, Asn-847, and Asn-955 are each glycosylated (N-linked (GlcNAc...) asparagine).

Belongs to the peptidase M28 family. Requires Zn(2+) as cofactor.

It is found in the vacuole membrane. In terms of biological role, may be involved in vacuolar sorting and osmoregulation. The sequence is that of Vacuolar membrane protease from Paracoccidioides lutzii (strain ATCC MYA-826 / Pb01) (Paracoccidioides brasiliensis).